The sequence spans 354 residues: Ornithine transcarbamylase, mitochondrial (354 aa).

A mitochondrion-targeting transit peptide spans 1 to 32; the sequence is MLSNLRILLNKAALRKAHTSMVRNFRYGKPVQ. Lysine 70 is subject to N6-acetyllysine; alternate. An N6-succinyllysine; alternate modification is found at lysine 70. N6-succinyllysine is present on lysine 80. At lysine 88 the chain carries N6-acetyllysine; alternate. Lysine 88 bears the N6-succinyllysine; alternate mark. 90–93 contributes to the carbamoyl phosphate binding site; sequence STRT. Serine 133 bears the Phosphoserine mark. A carbamoyl phosphate-binding site is contributed by arginine 141. At lysine 144 the chain carries N6-acetyllysine; alternate. Residue lysine 144 is modified to N6-succinyllysine; alternate. Histidine 168 and glutamine 171 together coordinate carbamoyl phosphate. Residue asparagine 199 coordinates L-ornithine. Lysine 221, lysine 231, and lysine 238 each carry N6-acetyllysine; alternate. N6-succinyllysine; alternate occurs at positions 221, 231, and 238. Aspartate 263, serine 267, and methionine 268 together coordinate L-ornithine. 2 positions are modified to N6-succinyllysine: lysine 274 and lysine 289. Residue lysine 292 is modified to N6-acetyllysine; alternate. Position 292 is an N6-succinyllysine; alternate (lysine 292). Cysteine 303 functions as the Proton acceptor in the catalytic mechanism. 303 to 304 lines the carbamoyl phosphate pocket; sequence CL. Lysine 307 is subject to N6-acetyllysine; alternate. Lysine 307 carries the post-translational modification N6-succinyllysine; alternate. Carbamoyl phosphate is bound at residue arginine 330.

Belongs to the aspartate/ornithine carbamoyltransferase superfamily. OTCase family. As to quaternary structure, homotrimer. Post-translationally, acetylation at Lys-88 negatively regulates ornithine carbamoyltransferase activity in response to nutrient signals.

Its subcellular location is the mitochondrion matrix. The enzyme catalyses carbamoyl phosphate + L-ornithine = L-citrulline + phosphate + H(+). Its pathway is nitrogen metabolism; urea cycle; L-citrulline from L-ornithine and carbamoyl phosphate: step 1/1. Its activity is regulated as follows. Negatively regulated by lysine acetylation. Its function is as follows. Catalyzes the second step of the urea cycle, the condensation of carbamoyl phosphate with L-ornithine to form L-citrulline. The urea cycle ensures the detoxification of ammonia by converting it to urea for excretion. In Rattus norvegicus (Rat), this protein is Ornithine transcarbamylase, mitochondrial.